Consider the following 492-residue polypeptide: N-succinylglutamate 5-semialdehyde dehydrogenase (492 aa).

220-225 (GSASTG) serves as a coordination point for NAD(+). Catalysis depends on residues E243 and C277.

The protein belongs to the aldehyde dehydrogenase family. AstD subfamily.

The catalysed reaction is N-succinyl-L-glutamate 5-semialdehyde + NAD(+) + H2O = N-succinyl-L-glutamate + NADH + 2 H(+). It functions in the pathway amino-acid degradation; L-arginine degradation via AST pathway; L-glutamate and succinate from L-arginine: step 4/5. Catalyzes the NAD-dependent reduction of succinylglutamate semialdehyde into succinylglutamate. The protein is N-succinylglutamate 5-semialdehyde dehydrogenase of Salmonella enteritidis PT4 (strain P125109).